A 259-amino-acid polypeptide reads, in one-letter code: Bisphosphoglycerate mutase (259 aa).

Position 2 is an N-acetylserine (S2). Residues K3 and K5 are each glycosylated (N-linked (Glc) (glycation) lysine; in vitro). 10-17 (RHGEGAWN) is a binding site for substrate. Catalysis depends on H11, which acts as the Tele-phosphohistidine intermediate. K18 is a glycosylation site (N-linked (Glc) (glycation) lysine; in vitro). Residue 23–24 (CS) participates in substrate binding. A glycan (N-linked (Glc) (glycation) lysine; in vitro) is linked at K43. Residues R62, 89-92 (ERHY), R100, and 116-117 (RR) contribute to the substrate site. Residue E89 is the Proton donor/acceptor of the active site. At T122 the chain carries Phosphothreonine. K159 carries an N-linked (Glc) (glycation) lysine glycan. 189–190 (GN) serves as a coordination point for substrate. Residue K197 is glycosylated (N-linked (Glc) (glycation) lysine; in vitro).

It belongs to the phosphoglycerate mutase family. BPG-dependent PGAM subfamily. Homodimer. In terms of processing, glycation of Lys-159 in diabetic patients inactivates the enzyme. In terms of tissue distribution, expressed in red blood cells. Expressed in non-erythroid cells of the placenta; present in the syncytiotrophoblast layer of the placental villi at the feto-maternal interface (at protein level).

The enzyme catalyses (2R)-3-phospho-glyceroyl phosphate = (2R)-2,3-bisphosphoglycerate + H(+). The catalysed reaction is (2R)-2-phosphoglycerate = (2R)-3-phosphoglycerate. At alkaline pH BPGM favors the synthase reaction; however, at lower pH the phosphatase reaction is dominant. Inhibited by citrate. Functionally, plays a major role in regulating hemoglobin oxygen affinity by controlling the levels of its allosteric effector 2,3-bisphosphoglycerate (2,3-BPG). Also exhibits mutase (EC 5.4.2.11) activity. The chain is Bisphosphoglycerate mutase (BPGM) from Homo sapiens (Human).